A 232-amino-acid polypeptide reads, in one-letter code: Fibrillarin-like rRNA/tRNA 2'-O-methyltransferase (232 aa).

Residues 89–90 (TT), 108–109 (EF), 133–134 (DA), and 153–156 (DIAQ) each bind S-adenosyl-L-methionine.

It belongs to the methyltransferase superfamily. Fibrillarin family. In terms of assembly, interacts with nop5. Component of box C/D small ribonucleoprotein (sRNP) particles that contain rpl7ae, FlpA and nop5, plus a guide RNA. These sRNP particles form homodimers, giving rise to an asymmetric holoenzyme.

Its function is as follows. Involved in pre-rRNA and tRNA processing. Utilizes the methyl donor S-adenosyl-L-methionine to catalyze the site-specific 2'-hydroxyl methylation of ribose moieties in rRNA and tRNA. Site specificity is provided by a guide RNA that base pairs with the substrate. Methylation occurs at a characteristic distance from the sequence involved in base pairing with the guide RNA. The chain is Fibrillarin-like rRNA/tRNA 2'-O-methyltransferase from Saccharolobus solfataricus (strain ATCC 35092 / DSM 1617 / JCM 11322 / P2) (Sulfolobus solfataricus).